The primary structure comprises 295 residues: MSLHSPGQAFRAALAKENPLQIVGAINANHALLAQRAGYQAIYLSGGGVAAGSLGLPDLGISTLDDVLTDIRRITDVCPLPLLVDADIGFGSSAFNVARTVKSIAKAGAAALHIEDQVGAKRCGHRPNKAIVSKEEMVDRIRAAVDARTDPNFVIMARTDALAVEGLEAALDRAQAYVDAGADMLFPEAITELSMYRRFADVAQVPILANITEFGATPLFTTDELRSAHVAMALYPLSAFRAMNRAAEKVYTVLRQEGTQKNVIDIMQTRNELYESINYYQFEEKLDALYRNKKS.

Substrate is bound at residue 45-47; it reads SGG. The Mg(2+) site is built by D85 and D87. Substrate contacts are provided by residues 123 to 124, R158, E188, 210 to 212, R241, and R270; these read CG and NIT.

It belongs to the isocitrate lyase/PEP mutase superfamily. Methylisocitrate lyase family. As to quaternary structure, homotetramer; dimer of dimers. It depends on Mg(2+) as a cofactor.

It catalyses the reaction (2S,3R)-3-hydroxybutane-1,2,3-tricarboxylate = pyruvate + succinate. The protein operates within organic acid metabolism; propanoate degradation. Functionally, involved in the catabolism of short chain fatty acids (SCFA) via the 2-methylcitrate cycle I (propionate degradation route). Catalyzes the thermodynamically favored C-C bond cleavage of (2R,3S)-2-methylisocitrate to yield pyruvate and succinate via an alpha-carboxy-carbanion intermediate. The protein is 2-methylisocitrate lyase of Salmonella typhimurium (strain LT2 / SGSC1412 / ATCC 700720).